The following is a 377-amino-acid chain: Lactosylceramide 1,3-N-acetyl-beta-D-glucosaminyltransferase B (377 aa).

The Cytoplasmic segment spans residues 1 to 13; sequence MLISARRLRRCQS. A helical; Signal-anchor for type II membrane protein membrane pass occupies residues 14-30; that stretch reads LQLLASCFVLSLMALLV. Residues 31–377 lie on the Lumenal side of the membrane; sequence QEDNSLVNHV…DTYPCSAAWS (347 aa). Residues Asn56, Asn167, and Asn275 are each glycosylated (N-linked (GlcNAc...) asparagine).

This sequence belongs to the glycosyltransferase 31 family.

The protein resides in the golgi apparatus membrane. The catalysed reaction is a beta-D-Gal-(1-&gt;4)-beta-D-Glc-(1&lt;-&gt;1)-Cer(d18:1(4E)) + UDP-N-acetyl-alpha-D-glucosamine = a beta-D-GlcNAc-(1-&gt;3)-beta-D-Gal-(1-&gt;4)-beta-D-Glc-(1&lt;-&gt;1)-Cer(d18:1(4E)) + UDP + H(+). The enzyme catalyses a neolactoside nLc4Cer(d18:1(4E)) + UDP-N-acetyl-alpha-D-glucosamine = a neolactoside IV(3)-beta-GlcNAc-nLc4Cer(d18:1(4E)) + UDP + H(+). It participates in protein modification; protein glycosylation. Beta-1,3-N-acetylglucosaminyltransferase that plays a key role in the synthesis of lacto- or neolacto-series carbohydrate chains on glycolipids. This is Lactosylceramide 1,3-N-acetyl-beta-D-glucosaminyltransferase B (b3gnt5-b) from Xenopus laevis (African clawed frog).